Here is a 552-residue protein sequence, read N- to C-terminus: Glutamine-dependent NAD(+) synthetase (552 aa).

Residues 11 to 253 form the CN hydrolase domain; sequence LRIAMAQFDF…DQWLVVDYAA (243 aa). The Proton acceptor; for glutaminase activity role is filled by glutamate 52. The active-site For glutaminase activity is lysine 119. An L-glutamine-binding site is contributed by tyrosine 125. Residue cysteine 157 is the Nucleophile; for glutaminase activity of the active site. Residues serine 183 and lysine 189 each contribute to the L-glutamine site. The tract at residues 275 to 552 is ligase; that stretch reads AWRAVVRGLK…YPITNGYSGQ (278 aa). 298-305 lines the ATP pocket; it reads GLSGGIDS. A deamido-NAD(+)-binding site is contributed by asparagine 381. Position 405 (threonine 405) interacts with ATP. Residues glutamate 410 and lysine 522 each coordinate deamido-NAD(+).

It in the C-terminal section; belongs to the NAD synthetase family.

It catalyses the reaction deamido-NAD(+) + L-glutamine + ATP + H2O = L-glutamate + AMP + diphosphate + NAD(+) + H(+). Its pathway is cofactor biosynthesis; NAD(+) biosynthesis; NAD(+) from deamido-NAD(+) (L-Gln route): step 1/1. Its function is as follows. Catalyzes the ATP-dependent amidation of deamido-NAD to form NAD. Uses L-glutamine as a nitrogen source. This Xanthomonas campestris pv. campestris (strain 8004) protein is Glutamine-dependent NAD(+) synthetase.